Reading from the N-terminus, the 378-residue chain is tRNA N(3)-cytidine methyltransferase METTL2B (378 aa).

An N-acetylalanine modification is found at Ala-2. Ser-4 carries the post-translational modification Phosphoserine. S-adenosyl-L-methionine-binding residues include Trp-78 and Tyr-82. The residue at position 154 (Thr-154) is a Phosphothreonine. S-adenosyl-L-methionine contacts are provided by Gly-188, Asp-213, Asp-239, Leu-240, and Ile-260.

The protein belongs to the methyltransferase superfamily. METL family. Monomer. Interacts with DALRD3.

The protein resides in the cytoplasm. The enzyme catalyses cytidine(32) in tRNA(Thr) + S-adenosyl-L-methionine = N(3)-methylcytidine(32) in tRNA(Thr) + S-adenosyl-L-homocysteine + H(+). The catalysed reaction is cytidine(32) in tRNA(Arg)(CCU) + S-adenosyl-L-methionine = N(3)-methylcytidine(32) in tRNA(Arg)(CCU) + S-adenosyl-L-homocysteine + H(+). Functionally, S-adenosyl-L-methionine-dependent methyltransferase that mediates N(3)-methylcytidine modification of residue 32 of the tRNA anticodon loop of tRNA(Thr)(UGU) and tRNA(Arg)(CCU). In Homo sapiens (Human), this protein is tRNA N(3)-cytidine methyltransferase METTL2B.